Here is a 180-residue protein sequence, read N- to C-terminus: Small ribosomal subunit protein bS16 (180 aa).

The protein belongs to the bacterial ribosomal protein bS16 family.

The chain is Small ribosomal subunit protein bS16 from Flavobacterium psychrophilum (strain ATCC 49511 / DSM 21280 / CIP 103535 / JIP02/86).